Here is a 321-residue protein sequence, read N- to C-terminus: tRNA(Ile)-lysidine synthase (321 aa).

20–25 (SGGADS) contacts ATP.

The protein belongs to the tRNA(Ile)-lysidine synthase family.

Its subcellular location is the cytoplasm. The enzyme catalyses cytidine(34) in tRNA(Ile2) + L-lysine + ATP = lysidine(34) in tRNA(Ile2) + AMP + diphosphate + H(+). Its function is as follows. Ligates lysine onto the cytidine present at position 34 of the AUA codon-specific tRNA(Ile) that contains the anticodon CAU, in an ATP-dependent manner. Cytidine is converted to lysidine, thus changing the amino acid specificity of the tRNA from methionine to isoleucine. The sequence is that of tRNA(Ile)-lysidine synthase from Bordetella pertussis (strain Tohama I / ATCC BAA-589 / NCTC 13251).